Reading from the N-terminus, the 215-residue chain is MKPFVIAIDGPAASGKGTLARKIATHYRLRHLDTGLTYRGVAHALLQQKLALNDEKSALAYAKKLDFNTLKPALLSSHELGEAASKIALIPALRDILVAKQRDFARIFPGSVLDGRDIGTVVCPDADIKFYLLANIQTRAKRRYQEILKKGAQADYHEILAHLEQRDSRDITRTQSPLKSAQNAHLLDTSELGIEATFKIACALIDPIIKAHIIE.

Residue 10–18 participates in ATP binding; the sequence is GPAASGKGT.

It belongs to the cytidylate kinase family. Type 1 subfamily.

It localises to the cytoplasm. It catalyses the reaction CMP + ATP = CDP + ADP. The enzyme catalyses dCMP + ATP = dCDP + ADP. In Bartonella quintana (strain Toulouse) (Rochalimaea quintana), this protein is Cytidylate kinase.